The primary structure comprises 252 residues: MERVLIVNADDFGLSKGQNYGIVEAYRNGVVTSTTALVNGEAIDHAAQLSRELPALGVGMHFVLTLGKPVSEMPGLTRDGLLGKWIWQMAEEDTLPLDEIAHELACQYQRFIDVFGREPTHLDSHHHVHMFPQIFPIVARFAAQRGIALRIDRQTVLNADDLPSDLRSTQGFSSEFYGEEITEACFLRILDASTHRGEASLEVMCHPAFVDNIIRQSAYCYPRLTELEVLTSASLKAAIAERGYRPGSFLDI.

Positions 61 and 125 each coordinate Mg(2+).

The protein belongs to the YdjC deacetylase family. ChbG subfamily. In terms of assembly, homodimer. Mg(2+) serves as cofactor.

It is found in the cytoplasm. It catalyses the reaction N,N'-diacetylchitobiose + H2O = N-acetyl-beta-D-glucosaminyl-(1-&gt;4)-D-glucosamine + acetate. The enzyme catalyses diacetylchitobiose-6'-phosphate + H2O = N'-monoacetylchitobiose-6'-phosphate + acetate. It participates in glycan degradation; chitin degradation. Involved in the degradation of chitin. ChbG is essential for growth on the acetylated chitooligosaccharides chitobiose and chitotriose but is dispensable for growth on cellobiose and chitosan dimer, the deacetylated form of chitobiose. Deacetylation of chitobiose-6-P and chitotriose-6-P is necessary for both the activation of the chb promoter by the regulatory protein ChbR and the hydrolysis of phosphorylated beta-glucosides by the phospho-beta-glucosidase ChbF. Catalyzes the removal of only one acetyl group from chitobiose-6-P to yield monoacetylchitobiose-6-P, the inducer of ChbR and the substrate of ChbF. The polypeptide is Chitooligosaccharide deacetylase (Salmonella paratyphi C (strain RKS4594)).